The chain runs to 121 residues: UPF0102 protein BT_2236 (121 aa).

Belongs to the UPF0102 family.

In Bacteroides thetaiotaomicron (strain ATCC 29148 / DSM 2079 / JCM 5827 / CCUG 10774 / NCTC 10582 / VPI-5482 / E50), this protein is UPF0102 protein BT_2236.